The chain runs to 448 residues: C4-dicarboxylate transport protein (448 aa).

9 consecutive transmembrane segments (helical) span residues 13-33 (SLYA…HFYP), 49-69 (LIKM…IAGM), 81-101 (LALL…LLVV), 149-169 (AFAK…GFAL), 193-213 (IVGI…AFTI), 227-247 (LMGA…GIVS), 294-314 (VVGL…SIYL), 336-356 (TLLA…GSGF), and 357-377 (IVLA…LALI).

It belongs to the dicarboxylate/amino acid:cation symporter (DAACS) (TC 2.A.23) family.

Its subcellular location is the cell inner membrane. Responsible for the transport of dicarboxylates such as succinate, fumarate, and malate from the periplasm across the membrane. The polypeptide is C4-dicarboxylate transport protein (Albidiferax ferrireducens (strain ATCC BAA-621 / DSM 15236 / T118) (Rhodoferax ferrireducens)).